A 535-amino-acid polypeptide reads, in one-letter code: GMP synthase [glutamine-hydrolyzing] (535 aa).

Residues 24 to 217 (KILIVDFGSQ…VRKVAGLTGD (194 aa)) form the Glutamine amidotransferase type-1 domain. Catalysis depends on Cys101, which acts as the Nucleophile. Catalysis depends on residues His191 and Glu193. The region spanning 218–410 (WTMRAFREEA…LGLPEIFVGR (193 aa)) is the GMPS ATP-PPase domain. ATP is bound at residue 245–251 (SGGVDSS).

Homodimer.

The catalysed reaction is XMP + L-glutamine + ATP + H2O = GMP + L-glutamate + AMP + diphosphate + 2 H(+). The protein operates within purine metabolism; GMP biosynthesis; GMP from XMP (L-Gln route): step 1/1. Its function is as follows. Catalyzes the synthesis of GMP from XMP. This chain is GMP synthase [glutamine-hydrolyzing], found in Nitrobacter winogradskyi (strain ATCC 25391 / DSM 10237 / CIP 104748 / NCIMB 11846 / Nb-255).